We begin with the raw amino-acid sequence, 267 residues long: Syntaxin-72 (267 aa).

Over 1–244 the chain is Cytoplasmic; sequence MPVIDIIFRV…QLVQMRSSRN (244 aa). Residues 53–87 adopt a coiled-coil conformation; the sequence is KAELASTEKNRAAAVAMNAEVRRTKARLAEDVVKL. Residues 173 to 235 enclose the t-SNARE coiled-coil homology domain; the sequence is EMRRKKQDEG…KNTNVRLKKQ (63 aa). A helical; Anchor for type IV membrane protein membrane pass occupies residues 245-265; the sequence is FCIDIILLCVILGIVSYIYNA. The Vesicular portion of the chain corresponds to 266–267; it reads LN.

The protein belongs to the syntaxin family. Part of the t-SNARE complex. Expressed in root, leaf, stem, flower and silique.

It is found in the membrane. Functionally, vesicle trafficking protein that functions in the secretory pathway. This chain is Syntaxin-72 (SYP72), found in Arabidopsis thaliana (Mouse-ear cress).